A 135-amino-acid polypeptide reads, in one-letter code: Succinate dehydrogenase assembly factor 3, mitochondrial (135 aa).

The disordered stretch occupies residues 73 to 101 (KENSNNNDNYNNNNNDNNNDNNNFINIGQ). Over residues 75–95 (NSNNNDNYNNNNNDNNNDNNN) the composition is skewed to low complexity.

Belongs to the complex I LYR family. SDHAF3 subfamily. Interacts with the iron-sulfur protein subunit within the SDH catalytic dimer.

The protein resides in the mitochondrion matrix. In terms of biological role, plays an essential role in the assembly of succinate dehydrogenase (SDH), an enzyme complex (also referred to as respiratory complex II) that is a component of both the tricarboxylic acid (TCA) cycle and the mitochondrial electron transport chain, and which couples the oxidation of succinate to fumarate with the reduction of ubiquinone (coenzyme Q) to ubiquinol. Promotes maturation of the iron-sulfur protein subunit of the SDH catalytic dimer, protecting it from the deleterious effects of oxidants. May act together with SDHAF1. This chain is Succinate dehydrogenase assembly factor 3, mitochondrial (acn9), found in Dictyostelium discoideum (Social amoeba).